The primary structure comprises 393 residues: MTNEEPLPKKVRLNESDFKVLPREELLQRWKQFEAYVQALENKYTDLNSNDVTGLRESEEKLKQQQQDSARRENILVMRLATKEQEMQECTTQIQHLKQVQQPSVAQLRATMVDPAINLFFIKMKAELEQTKDKLEQAQNELSAWKFTPDSQTGKKLMAKCRMLIQENQELGRQLSQGRIAQLEAELALQKKYSEELKSSQDELNDFIIQLDEEVEGMQSTILVLQQQLKDSRQQLSQFQQQIQTSGNRTPSSESKDEGETSGKDCGRILNGPSNGGSSHQRTHSSVGLYREGSSTEEDFSASPINEGKLPNHSEERTSRGGSSYMNQLSTGYESVDSPTGSENSLTHQSNDTDSNHDSQEEKPVSGKGNRTVSSRHLQNGLDSSVNVQGSVL.

Positions 240 to 393 are disordered; that stretch reads QQQIQTSGNR…SSVNVQGSVL (154 aa). Residues 254–267 are compositionally biased toward basic and acidic residues; the sequence is ESKDEGETSGKDCG. Polar residues predominate over residues 272 to 286; sequence GPSNGGSSHQRTHSS. Positions 310–319 are enriched in basic and acidic residues; that stretch reads LPNHSEERTS. Residues 320–353 show a composition bias toward polar residues; it reads RGGSSYMNQLSTGYESVDSPTGSENSLTHQSNDT. The segment covering 354 to 365 has biased composition (basic and acidic residues); that stretch reads DSNHDSQEEKPV. Over residues 369–393 the composition is skewed to polar residues; it reads GNRTVSSRHLQNGLDSSVNVQGSVL.

Belongs to the fl(2)d family. Component of the WMM complex, a N6-methyltransferase complex composed of a catalytic subcomplex, named MAC, and of an associated subcomplex, named MACOM. Component of the MACOM subcomplex.

It is found in the nucleus speckle. Its subcellular location is the nucleus. The protein localises to the nucleoplasm. Functionally, associated component of the WMM complex, a complex that mediates N6-methyladenosine (m6A) methylation of RNAs, a modification that plays a role in the efficiency of mRNA splicing and RNA processing. The sequence is that of Pre-mRNA-splicing regulator WTAP from Xenopus tropicalis (Western clawed frog).